The sequence spans 467 residues: ATP synthase subunit beta (467 aa).

150–157 (GGAGVGKT) contacts ATP.

The protein belongs to the ATPase alpha/beta chains family. As to quaternary structure, F-type ATPases have 2 components, CF(1) - the catalytic core - and CF(0) - the membrane proton channel. CF(1) has five subunits: alpha(3), beta(3), gamma(1), delta(1), epsilon(1). CF(0) has three main subunits: a(1), b(2) and c(9-12). The alpha and beta chains form an alternating ring which encloses part of the gamma chain. CF(1) is attached to CF(0) by a central stalk formed by the gamma and epsilon chains, while a peripheral stalk is formed by the delta and b chains.

The protein localises to the cell inner membrane. It carries out the reaction ATP + H2O + 4 H(+)(in) = ADP + phosphate + 5 H(+)(out). Functionally, produces ATP from ADP in the presence of a proton gradient across the membrane. The catalytic sites are hosted primarily by the beta subunits. This Vibrio parahaemolyticus serotype O3:K6 (strain RIMD 2210633) protein is ATP synthase subunit beta.